The primary structure comprises 148 residues: Thioredoxin H8 (148 aa).

Residues 1-145 (MGANVSTPDQ…LERKLNKYTQ (145 aa)) enclose the Thioredoxin domain. Active-site nucleophile residues include Cys71 and Cys74. Cys71 and Cys74 are oxidised to a cystine.

This sequence belongs to the thioredoxin family. Plant H-type subfamily.

Its subcellular location is the cytoplasm. In terms of biological role, probable thiol-disulfide oxidoreductase that may be involved in the redox regulation of a number of cytosolic enzymes. This is Thioredoxin H8 (TRX8) from Arabidopsis thaliana (Mouse-ear cress).